Consider the following 809-residue polypeptide: ATP-dependent RNA helicase HrpB (809 aa).

A Helicase ATP-binding domain is found at 14 to 177 (LTALDCAPQV…LPEAPVVISE (164 aa)). ATP is bound at residue 27-34 (APTGAGKS). The short motif at 123–126 (DEFH) is the DEFH box element. A Helicase C-terminal domain is found at 195–368 (RFDDAVAVAT…GLLMELLQWG (174 aa)). The interval 788-809 (PKHVWPDDPANTAPTRRTKKYS) is disordered.

It belongs to the DEAD box helicase family.

The enzyme catalyses ATP + H2O = ADP + phosphate + H(+). The chain is ATP-dependent RNA helicase HrpB (hrpB) from Escherichia coli (strain K12).